An 859-amino-acid polypeptide reads, in one-letter code: Toll-like receptor 5 (859 aa).

An N-terminal signal peptide occupies residues 1-26 (MACQLDLLIGVIFMASPVLVISPCSS). The Extracellular segment spans residues 27–641 (DGRIAFFRGC…EEEAMRSLKF (615 aa)). 3 N-linked (GlcNAc...) asparagine glycosylation sites follow: N37, N46, and N84. LRR repeat units lie at residues 45 to 69 (LNTTTERLLLSFNYISMVVATSFPL), 72 to 94 (RLQLLELGTQYANLTIGPGAFRN), 96 to 118 (PNLRILDLGQSQIEVLNRDAFQG), 121 to 144 (HLLELRLFSCGLSSAVLSDGYFRN), 147 to 167 (SLARLDLSGNQIHSLRLHSSF), 172 to 193 (SLSDVNFAFNQIFTICEDELEP), 198 to 212 (TLSFFGLKLTKLFSR), 215 to 230 (VGWETCRNPFRGVRLE), and 235 to 236 (SE). N-linked (GlcNAc...) asparagine glycosylation occurs at N246. LRR repeat units lie at residues 261–285 (LKHHIMGPGFGFQNIRDPDQSTFAS), 290–302 (SVLQLDLSHGFIF), 314–335 (DLKMLNLAFNKINKIGENAFYG), 338–356 (SLQVLNLSYNLLGELYNSN), 386–402 (TLQTLDLRDNALKAIGF), and 413–432 (GNKLVHLPHIHFTANFLELS). N-linked (GlcNAc...) asparagine glycosylation occurs at N343. A glycan (N-linked (GlcNAc...) asparagine) is linked at N438. LRR repeat units lie at residues 450-471 (QLQFLILNQNRLSSCKAAHTPS), 475-496 (SLEQLFLTENMLQLAWETGLCW), 504-525 (RLQILYLSNNYLNFLPPGIFND), 528-547 (ALRMLSLSANKLTVLSPGSL), and 550-568 (NLEILDISRNQLLCPDPAL). One can recognise an LRRCT domain in the interval 580-632 (NEFVCNCELSTFISWLNQTNVTLFGSPADVYCMYPNSLLGGSLYNISTEDCDE). 2 disulfides stabilise this stretch: C584–C611 and C586–C630. N-linked (GlcNAc...) asparagine glycosylation is found at N596, N599, and N624. A helical membrane pass occupies residues 642 to 662 (SLFILCTVTLTLFLVITLVVI). Residues 663-859 (KFRGICFLCY…IQLRTIATIS (197 aa)) lie on the Cytoplasmic side of the membrane. Residues 692 to 837 (YRYDAYFCFS…WFLDKLSGCI (146 aa)) enclose the TIR domain. A Phosphotyrosine modification is found at Y799.

Belongs to the Toll-like receptor family. In terms of assembly, homodimer. Interacts with MYD88 (via TIR domain). Interacts with TICAM1 (via TIR domain). Interacts with UNC93B1; this interaction is essential for proper TLR5 localization to the plasma membrane. Post-translationally, phosphorylated at Tyr-799 upon flagellin binding; required for signaling. In terms of tissue distribution, highly expressed in liver. Detected in lung and at very low levels in most other tissues.

Its subcellular location is the membrane. Functionally, pattern recognition receptor (PRR) located on the cell surface that participates in the activation of innate immunity and inflammatory response. Recognizes small molecular motifs named pathogen-associated molecular pattern (PAMPs) expressed by pathogens and microbe-associated molecular patterns (MAMPs) usually expressed by resident microbiota. Upon ligand binding such as bacterial flagellins, recruits intracellular adapter proteins MYD88 and TRIF leading to NF-kappa-B activation, cytokine secretion and induction of the inflammatory response. Plays thereby an important role in the relationship between the intestinal epithelium and enteric microbes and contributes to the gut microbiota composition throughout life. The polypeptide is Toll-like receptor 5 (Tlr5) (Mus musculus (Mouse)).